The primary structure comprises 208 residues: Thymidylate kinase (208 aa).

10-17 (GPEGSGKT) lines the ATP pocket.

The protein belongs to the thymidylate kinase family.

The catalysed reaction is dTMP + ATP = dTDP + ADP. Functionally, phosphorylation of dTMP to form dTDP in both de novo and salvage pathways of dTTP synthesis. This chain is Thymidylate kinase, found in Bacillus cereus (strain ATCC 10987 / NRS 248).